Here is a 117-residue protein sequence, read N- to C-terminus: MADEEISKAFRDLQFKTNETRMRIVQGEQNKKVNHQKMRISESTKRNLIGLNEDLKYYRSVGRMFLLTDKASEIARHETEAKQSKDKIEAIDKQKEYLEKGLVEAESNLRELIQSRR.

The protein belongs to the prefoldin subunit beta family. As to quaternary structure, heterohexamer of two PFD-alpha type and four PFD-beta type subunits.

Its subcellular location is the cytoplasm. Binds specifically to cytosolic chaperonin (c-CPN) and transfers target proteins to it. Binds to nascent polypeptide chain and promotes folding in an environment in which there are many competing pathways for nonnative proteins. Has a role in gonadogenesis. The protein is Probable prefoldin subunit 1 (pfd-1) of Caenorhabditis briggsae.